We begin with the raw amino-acid sequence, 419 residues long: Gamma-glutamyl phosphate reductase (419 aa).

It belongs to the gamma-glutamyl phosphate reductase family.

Its subcellular location is the cytoplasm. The enzyme catalyses L-glutamate 5-semialdehyde + phosphate + NADP(+) = L-glutamyl 5-phosphate + NADPH + H(+). It participates in amino-acid biosynthesis; L-proline biosynthesis; L-glutamate 5-semialdehyde from L-glutamate: step 2/2. Catalyzes the NADPH-dependent reduction of L-glutamate 5-phosphate into L-glutamate 5-semialdehyde and phosphate. The product spontaneously undergoes cyclization to form 1-pyrroline-5-carboxylate. The polypeptide is Gamma-glutamyl phosphate reductase (Gloeobacter violaceus (strain ATCC 29082 / PCC 7421)).